The sequence spans 790 residues: Vacuolar protein sorting-associated protein 35B (790 aa).

It belongs to the VPS35 family. As to quaternary structure, component of the retromer complex which consists of VPS29 (MAG1), VPS26 (VPS26A or VPS26B), VPS35 (VPS35A or VPS35B or VPS35C), VPS5/17 (SNX1 or SNX2A or SNX2B). Component of a retromer subcomplex consisting of VPS29 (MAG1), VPS26 (VPS26A or VPS26B), VPS35 (VPS35A or VPS35B or VPS35C). As to expression, expressed in siliques and maturing seeds (at protein level).

It is found in the cytoplasm. The protein localises to the endosome membrane. Its subcellular location is the prevacuolar compartment membrane. The protein resides in the golgi apparatus. It localises to the trans-Golgi network membrane. Plays a role in vesicular protein sorting. Component of the membrane-associated retromer complex which is essential in endosome-to-Golgi retrograde transport. Also involved in the efficient sorting of seed storage proteins globulin 12S and albumin 2S. The VPS29-VPS26-VPS35 subcomplex may be involved in recycling of specific cargos from endosome to the plasma membrane. This is Vacuolar protein sorting-associated protein 35B (VPS35B) from Arabidopsis thaliana (Mouse-ear cress).